The sequence spans 480 residues: MDALEAPELLLLPHLSALTPKTGFLIGLALAITAYCYYRHTQHPLYKFPGPRSAAWSNVLYCYYYIQGRQPFKLLELHNQYGSVVRTAPNDLSFNTAGAFRDIYNFRPGHETFIKSDWYDGGVFADKAHSIVSEREPGKHGHMRKYLSHAFSDKSLKAQEPLIDEVVNEFVSQLDVFGSKKGGIDIVVWFNLATFDIIGSLAFGESFGGVKSGEVHPWISRIITAIGQSALADAFKRFPKFATTFKWLFPKAIEKMLEDTAGHENYTISLIDKRLSNPSTRPDFLTRMLENRPEDLTDVQIAAHASDFVIAGSETTATTLSCIVYYLTKNPSVYQKATQEIRDRFERFEDINSTAASQLKYLHALALEAMRIYPPLPLALPRVVPKGGDTIDGHFVAEGTIVSVNPVAACLSTKNFDAPLEFRPERWLESDLVDDHEASQPFSMGPRACLGRNLAWIELSLLLSKMLWVYDIELLNTEVD.

A helical transmembrane segment spans residues 9–29 (LLLLPHLSALTPKTGFLIGLA). Asn265 and Asn352 each carry an N-linked (GlcNAc...) asparagine glycan. Cys449 contributes to the heme binding site.

It belongs to the cytochrome P450 family. Heme is required as a cofactor.

It localises to the membrane. It participates in sesquiterpene biosynthesis. Functionally, cytochrome P450 monooxygenase; part of the gene cluster that mediates the biosynthesis of PR-toxin, a bicyclic sesquiterpene belonging to the eremophilane class and acting as a mycotoxin. The first step of the pathway is catalyzed by the aristolochene synthase which performs the cyclization of trans,trans-farnesyl diphosphate (FPP) to the bicyclic sesquiterpene aristolochene. Following the formation of aristolochene, the non-oxygenated aristolochene is converted to the trioxygenated intermediate eremofortin B, via 7-epi-neopetasone. This conversion appears to involve three enzymes, a hydroxysterol oxidase-like enzyme, the quinone-oxidase prx3 that forms the quinone-type-structure in the bicyclic nucleus of aristolochene with the C8-oxo group and the C-3 hydroxyl group, and the P450 monooxygenase ORF6 that introduces the epoxide at the double bond between carbons 1 and 2. No monoxy or dioxy-intermediates have been reported to be released to the broth, so these three early oxidative reactions may be coupled together. Eremofortin B is further oxidized by another P450 monooxygenase, that introduces a second epoxide between carbons 7 and 11 prior to acetylation to eremofortin A by the acetyltransferase ORF8. The second epoxidation may be performed by a second P450 monooxygenase. After the acetylation step, eremofortin A is converted to eremofortin C and then to PR-toxin. First the conversion of eremofortin A to eremofortin C proceeds by oxidation of the side chain of the molecule at C-12 and is catalyzed by the short-chain oxidoreductase prx1. The cytochrome P450 monooxygenase ORF6 is probably also involved in this step. The primary alcohol formed at C-12 is finally oxidized by the short-chain alcohol dehydrogenase prx4 that forms PR-toxin. This is Cytochrome P450 monooxygenase ORF11 from Penicillium roqueforti (strain FM164).